A 359-amino-acid chain; its full sequence is Chorismate synthase (359 aa).

Arg47 is a binding site for NADP(+). FMN is bound by residues 123–125 (RSS), Gly283, 298–302 (KPTSS), and Arg326.

It belongs to the chorismate synthase family. In terms of assembly, homotetramer. FMNH2 serves as cofactor.

It carries out the reaction 5-O-(1-carboxyvinyl)-3-phosphoshikimate = chorismate + phosphate. The protein operates within metabolic intermediate biosynthesis; chorismate biosynthesis; chorismate from D-erythrose 4-phosphate and phosphoenolpyruvate: step 7/7. In terms of biological role, catalyzes the anti-1,4-elimination of the C-3 phosphate and the C-6 proR hydrogen from 5-enolpyruvylshikimate-3-phosphate (EPSP) to yield chorismate, which is the branch point compound that serves as the starting substrate for the three terminal pathways of aromatic amino acid biosynthesis. This reaction introduces a second double bond into the aromatic ring system. In Chlamydia pneumoniae (Chlamydophila pneumoniae), this protein is Chorismate synthase.